An 88-amino-acid chain; its full sequence is Large ribosomal subunit protein bL31B (88 aa).

It belongs to the bacterial ribosomal protein bL31 family. Type B subfamily. In terms of assembly, part of the 50S ribosomal subunit.

The chain is Large ribosomal subunit protein bL31B from Burkholderia orbicola (strain MC0-3).